Reading from the N-terminus, the 104-residue chain is Large ribosomal subunit protein uL24 (104 aa).

The protein belongs to the universal ribosomal protein uL24 family. In terms of assembly, part of the 50S ribosomal subunit.

Functionally, one of two assembly initiator proteins, it binds directly to the 5'-end of the 23S rRNA, where it nucleates assembly of the 50S subunit. One of the proteins that surrounds the polypeptide exit tunnel on the outside of the subunit. The polypeptide is Large ribosomal subunit protein uL24 (Yersinia pseudotuberculosis serotype O:1b (strain IP 31758)).